We begin with the raw amino-acid sequence, 310 residues long: Protein N-terminal asparagine amidohydrolase (310 aa).

As to quaternary structure, monomer.

Its subcellular location is the cytoplasm. It catalyses the reaction N-terminal L-asparaginyl-[protein] + H2O + H(+) = N-terminal L-aspartyl-[protein] + NH4(+). Functionally, N-terminal asparagine deamidase that mediates deamidation of N-terminal asparagine residues to aspartate. Required for the ubiquitin-dependent turnover of intracellular proteins that initiate with Met-Asn. These proteins are acetylated on the retained initiator methionine and can subsequently be modified by the removal of N-acetyl methionine by acylaminoacid hydrolase (AAH). Conversion of the resulting N-terminal asparagine to aspartate by NTAN1/PNAD renders the protein susceptible to arginylation, polyubiquitination and degradation as specified by the N-end rule. This enzyme does not act on substrates with internal or C-terminal asparagines and does not act on glutamine residues in any position. This is Protein N-terminal asparagine amidohydrolase from Mus musculus (Mouse).